Consider the following 496-residue polypeptide: NADP-dependent glyceraldehyde-3-phosphate dehydrogenase (496 aa).

Substrate-binding positions include Arg116 and 169 to 170; that span reads NY. NADP(+)-binding residues include Lys192, Thr195, and Asp230. 245-249 serves as a coordination point for NAD(+); the sequence is GGDTG. Glu264 acts as the Proton acceptor in catalysis. Substrate is bound at residue 297-299; sequence RCT. The active-site Nucleophile is Cys298. Residue Glu391 coordinates NADP(+). Ser404 is subject to Phosphoserine. Residue Arg451 coordinates substrate.

This sequence belongs to the aldehyde dehydrogenase family. As to quaternary structure, interacts with 14-3-3 protein when phosphorylated. This interaction is released by divalent cations. Post-translationally, phosphorylated in shoots and non-photosynthetic tissues, but not in leaves.

The protein localises to the cytoplasm. It catalyses the reaction D-glyceraldehyde 3-phosphate + NADP(+) + H2O = (2R)-3-phosphoglycerate + NADPH + 2 H(+). With respect to regulation, insensitive to magnesium or calcium when dephosphorylated. When phosphorylated, 3-fold activation by magnesium or calcium, 2-fold activation by potassium, inhibited by ADP and AMP and insensitive to ATP or PPi. Its function is as follows. Important as a means of generating NADPH for biosynthetic reactions. This is NADP-dependent glyceraldehyde-3-phosphate dehydrogenase (GAPN) from Triticum aestivum (Wheat).